The sequence spans 615 residues: ATP-dependent zinc metalloprotease FtsH 2 (615 aa).

The Cytoplasmic segment spans residues 1 to 7 (MNEPNRN). Residues 8–28 (FFWIFFLILGIFWLQSVWFGS) traverse the membrane as a helical segment. At 29 to 99 (RTVQQIPYSQ…VTYRREIENT (71 aa)) the chain is on the periplasmic side. Residues 100–120 (FFRDLLSWVVPALIFVAVFLY) traverse the membrane as a helical segment. Topologically, residues 121–615 (FSRKFAEKGG…APQRERDLSV (495 aa)) are cytoplasmic. Position 195–202 (195–202 (GPPGTGKT)) interacts with ATP. Residue H418 coordinates Zn(2+). E419 is a catalytic residue. Residues H422 and D495 each contribute to the Zn(2+) site.

It in the central section; belongs to the AAA ATPase family. This sequence in the C-terminal section; belongs to the peptidase M41 family. In terms of assembly, homohexamer. The cofactor is Zn(2+).

The protein resides in the cell inner membrane. Functionally, acts as a processive, ATP-dependent zinc metallopeptidase for both cytoplasmic and membrane proteins. Plays a role in the quality control of integral membrane proteins. The sequence is that of ATP-dependent zinc metalloprotease FtsH 2 from Bdellovibrio bacteriovorus (strain ATCC 15356 / DSM 50701 / NCIMB 9529 / HD100).